The sequence spans 426 residues: Bile acid CoA-transferase BaiF (426 aa).

Asp-168 functions as the Nucleophile in the catalytic mechanism.

The protein belongs to the CoA-transferase III family.

The catalysed reaction is lithocholoyl-CoA + cholate = choloyl-CoA + lithocholate. The enzyme catalyses deoxycholoyl-CoA + cholate = choloyl-CoA + deoxycholate. It carries out the reaction allodeoxycholoyl-CoA + cholate = allodeoxycholate + choloyl-CoA. It catalyses the reaction allocholate + deoxycholoyl-CoA = allocholoyl-CoA + deoxycholate. The catalysed reaction is allocholate + lithocholoyl-CoA = allocholoyl-CoA + lithocholate. The enzyme catalyses allocholate + allodeoxycholoyl-CoA = allocholoyl-CoA + allodeoxycholate. It carries out the reaction lithocholoyl-CoA + chenodeoxycholate = chenodeoxycholoyl-CoA + lithocholate. It catalyses the reaction ursodeoxycholate + deoxycholoyl-CoA = ursodeoxycholoyl-CoA + deoxycholate. The catalysed reaction is ursodeoxycholate + lithocholoyl-CoA = ursodeoxycholoyl-CoA + lithocholate. The enzyme catalyses allodeoxycholoyl-CoA + ursodeoxycholate = ursodeoxycholoyl-CoA + allodeoxycholate. It carries out the reaction beta-muricholate + lithocholoyl-CoA = beta-muricholoyl-CoA + lithocholate. It catalyses the reaction beta-muricholate + deoxycholoyl-CoA = beta-muricholoyl-CoA + deoxycholate. The catalysed reaction is beta-muricholate + allodeoxycholoyl-CoA = beta-muricholoyl-CoA + allodeoxycholate. The enzyme catalyses choloyl-CoA + H2O = cholate + CoA + H(+). It carries out the reaction chenodeoxycholoyl-CoA + H2O = chenodeoxycholate + CoA + H(+). It participates in lipid metabolism; bile acid biosynthesis. Functionally, functions in the bile acid 7alpha-dehydroxylation pathway, which forms secondary bile acids via the 7alpha-dehydroxylation of primary bile acids, and is carried out by intestinal anaerobic bacteria. Acts as a bile acid CoA transferase with broad bile acid substrate specificity. Catalyzes the transfer of the CoA moiety of secondary bile acid-CoA compounds to primary bile acids. Can use lithocholoyl-CoA, deoxycholoyl-CoA and allodeoxycholoyl-CoA as bile acid CoA donors and cholate, allocholate, chenodeoxycholate, ursodeoxycholate, and beta-muricholate as bile acid CoA acceptors. Also displays CoA hydrolase activity, being able to catalyze the hydrolysis of choloyl-CoA, 3-dehydrocholoyl-CoA, and chenodeoxycholoyl-CoA, releasing CoA and the corresponding free bile acid. However, this latter activity may not represent the actual activity of this enzyme, since using a transferase rather than hydrolase, the bacteria conserve the thioester bond energy, saving ATP molecules. Shows no hydrolytic activity with acetyl-CoA, isovaleryl-CoA, palmitoyl-CoA, or phenylacetyl-CoA as substrates. The sequence is that of Bile acid CoA-transferase BaiF from Clostridium scindens (strain JCM 10418 / VPI 12708).